A 122-amino-acid chain; its full sequence is Holo-[acyl-carrier-protein] synthase (122 aa).

Mg(2+) contacts are provided by aspartate 9 and glutamate 58.

It belongs to the P-Pant transferase superfamily. AcpS family. It depends on Mg(2+) as a cofactor.

It is found in the cytoplasm. The catalysed reaction is apo-[ACP] + CoA = holo-[ACP] + adenosine 3',5'-bisphosphate + H(+). Transfers the 4'-phosphopantetheine moiety from coenzyme A to a Ser of acyl-carrier-protein. The polypeptide is Holo-[acyl-carrier-protein] synthase (Chlamydia felis (strain Fe/C-56) (Chlamydophila felis)).